The primary structure comprises 111 residues: Nucleoid-associated protein VF_1686 (111 aa).

Disordered stretches follow at residues 1–23 (MFGGKGGMGNLMKQAQQMQDRMQ) and 89–111 (TQKEKMASVTGGMQMPPGFKMPF).

This sequence belongs to the YbaB/EbfC family. As to quaternary structure, homodimer.

The protein resides in the cytoplasm. The protein localises to the nucleoid. In terms of biological role, binds to DNA and alters its conformation. May be involved in regulation of gene expression, nucleoid organization and DNA protection. This chain is Nucleoid-associated protein VF_1686, found in Aliivibrio fischeri (strain ATCC 700601 / ES114) (Vibrio fischeri).